Reading from the N-terminus, the 368-residue chain is Peptide chain release factor 2 (368 aa).

The tract at residues 36-56 is disordered; that stretch reads EAQAGDPSLWDDPDHAQKVTS. At Gln-250 the chain carries N5-methylglutamine.

This sequence belongs to the prokaryotic/mitochondrial release factor family. Methylated by PrmC. Methylation increases the termination efficiency of RF2.

The protein localises to the cytoplasm. Its function is as follows. Peptide chain release factor 2 directs the termination of translation in response to the peptide chain termination codons UGA and UAA. This is Peptide chain release factor 2 from Corynebacterium aurimucosum (strain ATCC 700975 / DSM 44827 / CIP 107346 / CN-1) (Corynebacterium nigricans).